A 294-amino-acid polypeptide reads, in one-letter code: Pyridoxal 5'-phosphate synthase subunit PdxS (294 aa).

Residue Asp-24 coordinates D-ribose 5-phosphate. The Schiff-base intermediate with D-ribose 5-phosphate role is filled by Lys-81. Gly-153 is a D-ribose 5-phosphate binding site. Position 165 (Arg-165) interacts with D-glyceraldehyde 3-phosphate. Residues Gly-214 and 235-236 (GS) contribute to the D-ribose 5-phosphate site.

Belongs to the PdxS/SNZ family. Homohexamer and homododecamer. In the presence of PdxT, forms a dodecamer of heterodimers.

The enzyme catalyses aldehydo-D-ribose 5-phosphate + D-glyceraldehyde 3-phosphate + L-glutamine = pyridoxal 5'-phosphate + L-glutamate + phosphate + 3 H2O + H(+). It functions in the pathway cofactor biosynthesis; pyridoxal 5'-phosphate biosynthesis. Its function is as follows. Catalyzes the formation of pyridoxal 5'-phosphate from ribose 5-phosphate (RBP), glyceraldehyde 3-phosphate (G3P) and ammonia. The ammonia is provided by the PdxT subunit. Can also use ribulose 5-phosphate and dihydroxyacetone phosphate as substrates, resulting from enzyme-catalyzed isomerization of RBP and G3P, respectively. The protein is Pyridoxal 5'-phosphate synthase subunit PdxS of Bacillus subtilis (strain 168).